Consider the following 100-residue polypeptide: Urease subunit gamma (100 aa).

Belongs to the urease gamma subunit family. Heterotrimer of UreA (gamma), UreB (beta) and UreC (alpha) subunits. Three heterotrimers associate to form the active enzyme.

The protein localises to the cytoplasm. It carries out the reaction urea + 2 H2O + H(+) = hydrogencarbonate + 2 NH4(+). It functions in the pathway nitrogen metabolism; urea degradation; CO(2) and NH(3) from urea (urease route): step 1/1. In Staphylococcus xylosus, this protein is Urease subunit gamma.